The following is a 341-amino-acid chain: Cytochrome c biogenesis protein CcsA (341 aa).

The next 8 membrane-spanning stretches (helical) occupy residues 16–36 (LILL…GMSI), 37–57 (LPTL…TLLG), 68–88 (LSNL…VHLI), 97–117 (LVGV…ALSL), 142–162 (VMML…AFLI), 249–269 (IIGL…VWAN), 276–296 (WSWD…AAYL), and 310–330 (AILA…VNLL).

The protein belongs to the CcmF/CycK/Ccl1/NrfE/CcsA family. In terms of assembly, may interact with ccs1.

Its subcellular location is the cellular thylakoid membrane. Functionally, required during biogenesis of c-type cytochromes (cytochrome c6 and cytochrome f) at the step of heme attachment. The protein is Cytochrome c biogenesis protein CcsA of Rippkaea orientalis (strain PCC 8801 / RF-1) (Cyanothece sp. (strain PCC 8801)).